The sequence spans 225 residues: NAD(P)H-quinone oxidoreductase subunit K, chloroplastic (225 aa).

4 residues coordinate [4Fe-4S] cluster: cysteine 43, cysteine 44, cysteine 108, and cysteine 139.

It belongs to the complex I 20 kDa subunit family. NDH is composed of at least 16 different subunits, 5 of which are encoded in the nucleus. It depends on [4Fe-4S] cluster as a cofactor.

The protein localises to the plastid. The protein resides in the chloroplast thylakoid membrane. It catalyses the reaction a plastoquinone + NADH + (n+1) H(+)(in) = a plastoquinol + NAD(+) + n H(+)(out). The enzyme catalyses a plastoquinone + NADPH + (n+1) H(+)(in) = a plastoquinol + NADP(+) + n H(+)(out). NDH shuttles electrons from NAD(P)H:plastoquinone, via FMN and iron-sulfur (Fe-S) centers, to quinones in the photosynthetic chain and possibly in a chloroplast respiratory chain. The immediate electron acceptor for the enzyme in this species is believed to be plastoquinone. Couples the redox reaction to proton translocation, and thus conserves the redox energy in a proton gradient. In Barbarea verna (Land cress), this protein is NAD(P)H-quinone oxidoreductase subunit K, chloroplastic.